Reading from the N-terminus, the 1783-residue chain is Doublecortin domain-containing protein 1 (1783 aa).

Residues 93–133 (GLQDCSTHQTASDHSHDEISDLDSYKSNSKNNSCSISASKR) are disordered. Over residues 117–131 (YKSNSKNNSCSISAS) the composition is skewed to low complexity. The Doublecortin 1 domain maps to 168-252 (KLQPRVIKVT…FLNPFKKIKD (85 aa)). The Ricin B-type lectin 1 domain occupies 702-800 (WLITKTGMIL…HIHHGAWTTA (99 aa)). Residues 860–880 (ASAQRWAIKHEGTSKPGQWKH) are disordered. Residues 925–1015 (PICKTTEPYA…ELWINPDLSI (91 aa)) form the Doublecortin 2 domain. The region spanning 1151–1266 (SCSPKHSKLH…GAANQKWHYM (116 aa)) is the Ricin B-type lectin 2 domain.

As to quaternary structure, interacts with dynein intermediate chain, tubulin, RAB8A, RAB3IP, NUDC, PAFAH1B1 and DCTN1.

The protein localises to the midbody. Its subcellular location is the midbody ring. It is found in the cytoplasm. The protein resides in the cytoskeleton. It localises to the spindle. Functionally, microtubule-binding protein which plays an important role in mediating dynein-dependent transport of RAB8A-positive vesicles to the midbody during cytokinesis. The chain is Doublecortin domain-containing protein 1 from Homo sapiens (Human).